The sequence spans 30 residues: Kappa-sparatoxin-Hv1b (30 aa).

Disulfide bonds link Cys-3/Cys-17, Cys-10/Cys-22, and Cys-16/Cys-26. At Trp-30 the chain carries Tryptophan amide.

It belongs to the neurotoxin 10 (Hwtx-1) family. 19 (HpTX2) subfamily. Expressed by the venom gland.

The protein localises to the secreted. In terms of biological role, inhibitor of voltage-gated potassium channels of the Kv4/KCND family. Inhibition of Kv4.3/KCND3 and Kv4.2/KCND2 is strongly voltage-dependent, while inhibition of Kv4.1/KCND1 shows less voltage-dependence. Its binding site may be near the potassium channel voltage sensor. Also blocks calcium channels. In Heteropoda venatoria (Brown huntsman spider), this protein is Kappa-sparatoxin-Hv1b.